The following is a 448-amino-acid chain: MSQSTATYINVIGAGLAGSEAAYQIAKRGIPVKLYEMRGVKATPQHKTTNFAELVCSNSFRGDSLTNAVGLLKEEMRRLDSIIMRNGEANRVPAGGAMAVDREGYAESVTAELENHPLIEVIRDEITEIPDDAITVIATGPLTSDALAEKIHALNGGDGFYFYDAAAPIIDKSTIDMSKVYLKSRYDKGEAAYLNCPMTKEEFMAFHEALTTAEEAPLNAFEKEKYFEGCMPIEVMAKRGIKTMLYGPMKPVGLEYPDDYTGPRDGEFKTPYAVVQLRQDNAAGSLYNIVGFQTHLKWGEQKRVFQTIPGLENAEFVRYGVMHRNSYMDSPNLLTETFQSRSNPNLFFAGQMTGVEGYVESAASGLVAGINAARLFKREEALIFPQTTAIGSLPHYVTHADSKHFQPMNVNFGIIKELEGPRIRDKKERYEAIASRALADLDTCLASL.

13–18 (GAGLAG) lines the FAD pocket.

This sequence belongs to the MnmG family. TrmFO subfamily. Requires FAD as cofactor.

It localises to the cytoplasm. The catalysed reaction is uridine(54) in tRNA + (6R)-5,10-methylene-5,6,7,8-tetrahydrofolate + NADH + H(+) = 5-methyluridine(54) in tRNA + (6S)-5,6,7,8-tetrahydrofolate + NAD(+). The enzyme catalyses uridine(54) in tRNA + (6R)-5,10-methylene-5,6,7,8-tetrahydrofolate + NADPH + H(+) = 5-methyluridine(54) in tRNA + (6S)-5,6,7,8-tetrahydrofolate + NADP(+). Catalyzes the folate-dependent formation of 5-methyl-uridine at position 54 (M-5-U54) in all tRNAs. This Streptococcus pyogenes serotype M6 (strain ATCC BAA-946 / MGAS10394) protein is Methylenetetrahydrofolate--tRNA-(uracil-5-)-methyltransferase TrmFO.